A 124-amino-acid polypeptide reads, in one-letter code: Small polypeptide ROTUNDIFOLIA LIKE 3 (124 aa).

The segment at 1 to 23 (MEDERWKLSSSKGRSKSGRSCSS) is disordered. Asparagine 35 and asparagine 38 each carry an N-linked (GlcNAc...) asparagine glycan. Residues 59-75 (AWSAAGAGGGGASSSSS) traverse the membrane as a helical segment. A disordered region spans residues 60 to 95 (WSAAGAGGGGASSSSSSQHQHQQQQQQSNNSQRLSK). The span at 71–91 (SSSSSSQHQHQQQQQQSNNSQ) shows a compositional bias: low complexity. N-linked (GlcNAc...) asparagine glycosylation occurs at asparagine 88. Residues 92–124 (RLSKKCVEAVKEHRARFYIVRRCVSMLVCWRDY) are required for DVL/RTFL small polypeptide activity.

Belongs to the DVL/RTFL small polypeptides family.

The protein localises to the cell membrane. Functionally, small polypeptide acting as a regulatory molecule which coordinates cellular responses required for differentiation, growth and development, probably by restricting polar cell proliferation in lateral organs (e.g. leaves and petioles). The protein is Small polypeptide ROTUNDIFOLIA LIKE 3 of Oryza sativa subsp. japonica (Rice).